Reading from the N-terminus, the 279-residue chain is ATP synthase subunit delta (279 aa).

This sequence belongs to the ATPase delta chain family. F-type ATPases have 2 components, F(1) - the catalytic core - and F(0) - the membrane proton channel. F(1) has five subunits: alpha(3), beta(3), gamma(1), delta(1), epsilon(1). F(0) has three main subunits: a(1), b(2) and c(10-14). The alpha and beta chains form an alternating ring which encloses part of the gamma chain. F(1) is attached to F(0) by a central stalk formed by the gamma and epsilon chains, while a peripheral stalk is formed by the delta and b chains.

It localises to the cell membrane. F(1)F(0) ATP synthase produces ATP from ADP in the presence of a proton or sodium gradient. F-type ATPases consist of two structural domains, F(1) containing the extramembraneous catalytic core and F(0) containing the membrane proton channel, linked together by a central stalk and a peripheral stalk. During catalysis, ATP synthesis in the catalytic domain of F(1) is coupled via a rotary mechanism of the central stalk subunits to proton translocation. In terms of biological role, this protein is part of the stalk that links CF(0) to CF(1). It either transmits conformational changes from CF(0) to CF(1) or is implicated in proton conduction. The polypeptide is ATP synthase subunit delta (Parafrankia sp. (strain EAN1pec)).